A 275-amino-acid chain; its full sequence is NH(3)-dependent NAD(+) synthetase (275 aa).

Gly46 to Ser53 contacts ATP. Residue Asp52 participates in Mg(2+) binding. Arg140 lines the deamido-NAD(+) pocket. Thr160 lines the ATP pocket. Glu165 is a binding site for Mg(2+). Deamido-NAD(+) contacts are provided by Lys173 and Asp180. Residues Lys189 and Thr211 each contribute to the ATP site. His260–Lys261 lines the deamido-NAD(+) pocket.

This sequence belongs to the NAD synthetase family. Homodimer.

The enzyme catalyses deamido-NAD(+) + NH4(+) + ATP = AMP + diphosphate + NAD(+) + H(+). Its pathway is cofactor biosynthesis; NAD(+) biosynthesis; NAD(+) from deamido-NAD(+) (ammonia route): step 1/1. Functionally, catalyzes the ATP-dependent amidation of deamido-NAD to form NAD. Uses ammonia as a nitrogen source. The chain is NH(3)-dependent NAD(+) synthetase from Escherichia fergusonii (strain ATCC 35469 / DSM 13698 / CCUG 18766 / IAM 14443 / JCM 21226 / LMG 7866 / NBRC 102419 / NCTC 12128 / CDC 0568-73).